We begin with the raw amino-acid sequence, 808 residues long: Phenylalanine--tRNA ligase beta subunit (808 aa).

The tRNA-binding domain occupies 40-155; the sequence is NQGATGVVVG…DDVEIGSDAL (116 aa). A B5 domain is found at 409–484; the sequence is IEEPVVSLNL…RLYGYDNIPT (76 aa). Residues Asp462, Asp468, Glu471, and Glu472 each coordinate Mg(2+). One can recognise an FDX-ACB domain in the interval 714 to 807; the sequence is PRFPAISRDI…LEASTGAVLR (94 aa).

The protein belongs to the phenylalanyl-tRNA synthetase beta subunit family. Type 1 subfamily. In terms of assembly, tetramer of two alpha and two beta subunits. It depends on Mg(2+) as a cofactor.

It is found in the cytoplasm. It carries out the reaction tRNA(Phe) + L-phenylalanine + ATP = L-phenylalanyl-tRNA(Phe) + AMP + diphosphate + H(+). This is Phenylalanine--tRNA ligase beta subunit (pheT) from Halalkalibacterium halodurans (strain ATCC BAA-125 / DSM 18197 / FERM 7344 / JCM 9153 / C-125) (Bacillus halodurans).